The sequence spans 343 residues: Probable dolichyl-diphosphooligosaccharide--protein glycosyltransferase subunit 3A (343 aa).

The signal sequence occupies residues 1–22 (MVIQTNLSYRFFILIVFLFTLA). The Lumenal portion of the chain corresponds to 23–185 (NPKSDSDLKN…TVCSIQRPPL (163 aa)). N-linked (GlcNAc...) asparagine glycans are attached at residues asparagine 105, asparagine 108, and asparagine 146. Residues 186–206 (ISKTQIGIIVAIIIISTPILI) traverse the membrane as a helical segment. Over 207-220 (KKILKGETLLHDHR) the chain is Cytoplasmic. Residues 221–241 (IWLVGAVFVYFFSVSGTMHNI) traverse the membrane as a helical segment. Residues 242-273 (IREMPMYIKDYEDSSKFVFFIEESEMQLGAEG) are Lumenal-facing. The chain crosses the membrane as a helical span at residues 274–294 (FFVGFLYTVVGLLLAFVTNVV). The Cytoplasmic segment spans residues 295–304 (VRVKKLDEQR). Residues 305-325 (MAMLLALSISFWAVRKVVYLD) form a helical membrane-spanning segment. Residues 326-343 (NWKTGYEIYPYWPSSWRG) lie on the Lumenal side of the membrane.

Belongs to the OST3/OST6 family. In terms of assembly, component of the oligosaccharyltransferase (OST) complex.

The protein resides in the endoplasmic reticulum membrane. Functionally, subunit of the oligosaccharyl transferase (OST) complex that catalyzes the initial transfer of a defined glycan (Glc(3)Man(9)GlcNAc(2) in eukaryotes) from the lipid carrier dolichol-pyrophosphate to an asparagine residue within an Asn-X-Ser/Thr consensus motif in nascent polypeptide chains, the first step in protein N-glycosylation. N-glycosylation occurs cotranslationally and the complex associates with the Sec61 complex at the channel-forming translocon complex that mediates protein translocation across the endoplasmic reticulum (ER). All subunits are required for a maximal enzyme activity. This is Probable dolichyl-diphosphooligosaccharide--protein glycosyltransferase subunit 3A (OST3A) from Arabidopsis thaliana (Mouse-ear cress).